We begin with the raw amino-acid sequence, 92 residues long: Small ribosomal subunit protein uS19 (92 aa).

This sequence belongs to the universal ribosomal protein uS19 family.

Functionally, protein S19 forms a complex with S13 that binds strongly to the 16S ribosomal RNA. The sequence is that of Small ribosomal subunit protein uS19 from Rickettsia bellii (strain OSU 85-389).